Here is a 355-residue protein sequence, read N- to C-terminus: Methionine import ATP-binding protein MetN (355 aa).

The 243-residue stretch at 8 to 250 (LKNIDITFTQ…PQEDLTQEFI (243 aa)) folds into the ABC transporter domain. 42-49 (GYSGAGKS) is an ATP binding site.

Belongs to the ABC transporter superfamily. Methionine importer (TC 3.A.1.24) family. The complex is composed of two ATP-binding proteins (MetN), two transmembrane proteins (MetI) and a solute-binding protein (MetQ).

It is found in the cell membrane. It carries out the reaction L-methionine(out) + ATP + H2O = L-methionine(in) + ADP + phosphate + H(+). It catalyses the reaction D-methionine(out) + ATP + H2O = D-methionine(in) + ADP + phosphate + H(+). In terms of biological role, part of the ABC transporter complex MetNIQ involved in methionine import. Responsible for energy coupling to the transport system. The polypeptide is Methionine import ATP-binding protein MetN (Streptococcus thermophilus (strain ATCC BAA-250 / LMG 18311)).